We begin with the raw amino-acid sequence, 492 residues long: 5-taurinomethyluridine-[tRNA] synthase subunit GTPB3, mitochondrial (492 aa).

The transit peptide at 1–20 (MWRGLSALVTQAAWAPLRLC) directs the protein to the mitochondrion. Residues Arg-52, Glu-112, and Lys-152 each coordinate 5,10-methylenetetrahydrofolate. Residues 249–416 (GANVVVTGPP…LLQALKTELA (168 aa)) enclose the TrmE-type G domain. Residues 256–263 (GPPNAGKS), 282–286 (GTTRD), 303–306 (DTAG), and 374–377 (NKSD) each bind GTP. K(+) is bound at residue Asn-259. The Mg(2+) site is built by Ser-263 and Thr-284. 5,10-methylenetetrahydrofolate is bound at residue Lys-492.

This sequence belongs to the TRAFAC class TrmE-Era-EngA-EngB-Septin-like GTPase superfamily. TrmE GTPase family. As to quaternary structure, homodimer; forms a dimer in the presence of potassium. Interacts with MTO1; forms the GTPBP3-MTO1 complex composed of homodimers of GTPBP3 and MTO1. The cofactor is K(+). As to expression, ubiquitously expressed. Highly expressed in tissues with high metabolic rates including heart, liver and brain. Weakly expressed in skeletal muscle.

It localises to the mitochondrion. The enzyme catalyses GTP + H2O = GDP + phosphate + H(+). Functionally, GTPase component of the GTPBP3-MTO1 complex that catalyzes the 5-taurinomethyluridine (taum(5)U) modification at the 34th wobble position (U34) of mitochondrial tRNAs (mt-tRNAs), which plays a role in mt-tRNA decoding and mitochondrial translation. Taum(5)U formation on mammalian mt-tRNA requires the presence of both GTPBP3-mediated GTPase activity and MTO1 catalytic activity. The protein is 5-taurinomethyluridine-[tRNA] synthase subunit GTPB3, mitochondrial of Mus musculus (Mouse).